The chain runs to 371 residues: Maltose/maltodextrin import ATP-binding protein MalK (371 aa).

Residues 4 to 234 (VQLQNVTKAW…PADRFVAGFI (231 aa)) enclose the ABC transporter domain. An ATP-binding site is contributed by 36 to 43 (GPSGCGKS).

Belongs to the ABC transporter superfamily. Maltooligosaccharide importer (TC 3.A.1.1.1) family. In terms of assembly, the complex is composed of two ATP-binding proteins (MalK), two transmembrane proteins (MalG and MalK) and a solute-binding protein (MalE).

The protein localises to the cell inner membrane. The enzyme catalyses D-maltose(out) + ATP + H2O = D-maltose(in) + ADP + phosphate + H(+). Its function is as follows. Part of the ABC transporter complex MalEFGK involved in maltose/maltodextrin import. Responsible for energy coupling to the transport system. This is Maltose/maltodextrin import ATP-binding protein MalK from Escherichia coli O157:H7.